A 527-amino-acid chain; its full sequence is Peptide chain release factor 3 (527 aa).

The region spanning 10-278 is the tr-type G domain; sequence DRRRTFAIIS…TFVENAPAPL (269 aa). Residues 19 to 26, 87 to 91, and 141 to 144 each bind GTP; these read SHPDAGKT, DTPGH, and NKLD.

Belongs to the TRAFAC class translation factor GTPase superfamily. Classic translation factor GTPase family. PrfC subfamily.

The protein localises to the cytoplasm. Increases the formation of ribosomal termination complexes and stimulates activities of RF-1 and RF-2. It binds guanine nucleotides and has strong preference for UGA stop codons. It may interact directly with the ribosome. The stimulation of RF-1 and RF-2 is significantly reduced by GTP and GDP, but not by GMP. This Geobacter metallireducens (strain ATCC 53774 / DSM 7210 / GS-15) protein is Peptide chain release factor 3.